The chain runs to 260 residues: Flap endonuclease Xni (260 aa).

Aspartate 105 contributes to the Mg(2+) binding site. The region spanning 164–259 (NQFLDLMALA…VNGPANTQQA (96 aa)) is the 5'-3' exonuclease domain. Leucine 172, alanine 173, proline 181, isoleucine 183, and isoleucine 186 together coordinate K(+). The interval 185–190 (GIGPKS) is interaction with DNA.

Belongs to the Xni family. The cofactor is Mg(2+). K(+) is required as a cofactor.

Has flap endonuclease activity. During DNA replication, flap endonucleases cleave the 5'-overhanging flap structure that is generated by displacement synthesis when DNA polymerase encounters the 5'-end of a downstream Okazaki fragment. The chain is Flap endonuclease Xni from Shewanella sp. (strain MR-4).